The chain runs to 149 residues: Large ribosomal subunit protein uL13 (149 aa).

This sequence belongs to the universal ribosomal protein uL13 family. In terms of assembly, part of the 50S ribosomal subunit.

Functionally, this protein is one of the early assembly proteins of the 50S ribosomal subunit, although it is not seen to bind rRNA by itself. It is important during the early stages of 50S assembly. The polypeptide is Large ribosomal subunit protein uL13 (Cyanothece sp. (strain PCC 7425 / ATCC 29141)).